The primary structure comprises 340 residues: tRNA N6-adenosine threonylcarbamoyltransferase (340 aa).

Positions 113 and 117 each coordinate Fe cation. Substrate-binding positions include 135–139 (LVSGG), D169, G182, D186, and N274. Position 302 (D302) interacts with Fe cation.

This sequence belongs to the KAE1 / TsaD family. Fe(2+) is required as a cofactor.

It localises to the cytoplasm. It catalyses the reaction L-threonylcarbamoyladenylate + adenosine(37) in tRNA = N(6)-L-threonylcarbamoyladenosine(37) in tRNA + AMP + H(+). Required for the formation of a threonylcarbamoyl group on adenosine at position 37 (t(6)A37) in tRNAs that read codons beginning with adenine. Is involved in the transfer of the threonylcarbamoyl moiety of threonylcarbamoyl-AMP (TC-AMP) to the N6 group of A37, together with TsaE and TsaB. TsaD likely plays a direct catalytic role in this reaction. The protein is tRNA N6-adenosine threonylcarbamoyltransferase of Mycolicibacterium gilvum (strain PYR-GCK) (Mycobacterium gilvum (strain PYR-GCK)).